The primary structure comprises 787 residues: Probable phosphoketolase (787 aa).

It belongs to the XFP family. Thiamine diphosphate serves as cofactor.

This is Probable phosphoketolase from Pediococcus pentosaceus (strain ATCC 25745 / CCUG 21536 / LMG 10740 / 183-1w).